The primary structure comprises 178 residues: Large ribosomal subunit protein uL6 (178 aa).

The protein belongs to the universal ribosomal protein uL6 family. As to quaternary structure, part of the 50S ribosomal subunit.

Functionally, this protein binds to the 23S rRNA, and is important in its secondary structure. It is located near the subunit interface in the base of the L7/L12 stalk, and near the tRNA binding site of the peptidyltransferase center. The sequence is that of Large ribosomal subunit protein uL6 from Corynebacterium kroppenstedtii (strain DSM 44385 / JCM 11950 / CIP 105744 / CCUG 35717).